The primary structure comprises 428 residues: Serine--tRNA ligase (428 aa).

231-233 (TSE) contacts L-serine. ATP contacts are provided by residues 262 to 264 (RRE) and valine 278. L-serine is bound at residue glutamate 285. An ATP-binding site is contributed by 349 to 352 (ELTS). Threonine 384 serves as a coordination point for L-serine.

It belongs to the class-II aminoacyl-tRNA synthetase family. Type-1 seryl-tRNA synthetase subfamily. As to quaternary structure, homodimer. The tRNA molecule binds across the dimer.

It is found in the cytoplasm. It carries out the reaction tRNA(Ser) + L-serine + ATP = L-seryl-tRNA(Ser) + AMP + diphosphate + H(+). The catalysed reaction is tRNA(Sec) + L-serine + ATP = L-seryl-tRNA(Sec) + AMP + diphosphate + H(+). It functions in the pathway aminoacyl-tRNA biosynthesis; selenocysteinyl-tRNA(Sec) biosynthesis; L-seryl-tRNA(Sec) from L-serine and tRNA(Sec): step 1/1. Catalyzes the attachment of serine to tRNA(Ser). Is also able to aminoacylate tRNA(Sec) with serine, to form the misacylated tRNA L-seryl-tRNA(Sec), which will be further converted into selenocysteinyl-tRNA(Sec). The protein is Serine--tRNA ligase of Bifidobacterium adolescentis (strain ATCC 15703 / DSM 20083 / NCTC 11814 / E194a).